Reading from the N-terminus, the 257-residue chain is Snake venom serine protease KN1 (257 aa).

The N-terminal stretch at 1–18 (MVLIRVLANLLILQLSYA) is a signal peptide. The propeptide occupies 19 to 24 (QKSSEL). In terms of domain architecture, Peptidase S1 spans 25–248 (VVGGHPCNIN…HLDWIKSIIA (224 aa)). 5 disulfide bridges follow: Cys31–Cys162, Cys49–Cys65, Cys141–Cys209, Cys173–Cys188, and Cys199–Cys224. His64 acts as the Charge relay system in catalysis. N-linked (GlcNAc...) asparagine glycosylation is present at Asn102. Asp109 functions as the Charge relay system in the catalytic mechanism. Residues Asn120 and Asn121 are each glycosylated (N-linked (GlcNAc...) asparagine). The active-site Charge relay system is Ser203.

It belongs to the peptidase S1 family. Snake venom subfamily. As to quaternary structure, monomer. As to expression, expressed by the venom gland.

The protein resides in the secreted. In terms of biological role, snake venom serine protease that may act in the hemostasis system of the prey. This Trimeresurus stejnegeri (Chinese green tree viper) protein is Snake venom serine protease KN1.